The following is a 347-amino-acid chain: NADH-ubiquinone oxidoreductase chain 2 (347 aa).

11 helical membrane passes run 3–23 (PIIL…VMIS), 25–45 (HWLL…PIMM), 67–87 (SMLL…WTVM), 96–116 (MLMT…FWVP), 122–142 (IPLS…MSVL), 145–165 (ILPS…ITIG), 178–198 (IMAY…LYNP), 200–220 (MTLL…TLFM), 237–257 (APIM…LPPL), 274–294 (DSII…YFYM), and 325–345 (LLPT…ILSI).

This sequence belongs to the complex I subunit 2 family. In terms of assembly, core subunit of respiratory chain NADH dehydrogenase (Complex I) which is composed of 45 different subunits. Interacts with TMEM242.

Its subcellular location is the mitochondrion inner membrane. The enzyme catalyses a ubiquinone + NADH + 5 H(+)(in) = a ubiquinol + NAD(+) + 4 H(+)(out). In terms of biological role, core subunit of the mitochondrial membrane respiratory chain NADH dehydrogenase (Complex I) which catalyzes electron transfer from NADH through the respiratory chain, using ubiquinone as an electron acceptor. Essential for the catalytic activity and assembly of complex I. This chain is NADH-ubiquinone oxidoreductase chain 2, found in Ovis aries (Sheep).